The chain runs to 255 residues: Diphthine synthase (255 aa).

S-adenosyl-L-methionine-binding positions include leucine 9, aspartate 85, valine 88, 113-114 (SI), leucine 164, alanine 207, and histidine 232.

This sequence belongs to the diphthine synthase family. As to quaternary structure, homodimer.

It carries out the reaction 2-[(3S)-amino-3-carboxypropyl]-L-histidyl-[translation elongation factor 2] + 3 S-adenosyl-L-methionine = diphthine-[translation elongation factor 2] + 3 S-adenosyl-L-homocysteine + 3 H(+). It functions in the pathway protein modification; peptidyl-diphthamide biosynthesis. S-adenosyl-L-methionine-dependent methyltransferase that catalyzes the trimethylation of the amino group of the modified target histidine residue in translation elongation factor 2 (EF-2), to form an intermediate called diphthine. The three successive methylation reactions represent the second step of diphthamide biosynthesis. The chain is Diphthine synthase from Methanococcus maripaludis (strain C7 / ATCC BAA-1331).